The following is a 389-amino-acid chain: tRNA-specific 2-thiouridylase MnmA (389 aa).

ATP contacts are provided by residues Gly30–Ser37 and Leu56. Cys117 (nucleophile) is an active-site residue. Cysteines 117 and 216 form a disulfide. Gly142 lines the ATP pocket. An interaction with tRNA region spans residues Lys166–Gln168. Catalysis depends on Cys216, which acts as the Cysteine persulfide intermediate. The segment at Arg321 to Tyr322 is interaction with tRNA.

It belongs to the MnmA/TRMU family.

It is found in the cytoplasm. It carries out the reaction S-sulfanyl-L-cysteinyl-[protein] + uridine(34) in tRNA + AH2 + ATP = 2-thiouridine(34) in tRNA + L-cysteinyl-[protein] + A + AMP + diphosphate + H(+). Catalyzes the 2-thiolation of uridine at the wobble position (U34) of tRNA, leading to the formation of s(2)U34. In Synechococcus sp. (strain CC9902), this protein is tRNA-specific 2-thiouridylase MnmA.